An 855-amino-acid chain; its full sequence is Inactive rhomboid protein 1 (855 aa).

Residues 1-36 (MSEARRDSTSSLQRKKPPWLKLDIPSAVPPTAEEPS) are disordered. Residues 1–411 (MSEARRDSTS…HRPFFTYWLT (411 aa)) lie on the Cytoplasmic side of the membrane. Phosphoserine is present on residues serine 76 and serine 176. 2 positions are modified to phosphothreonine: threonine 180 and threonine 183. The residue at position 390 (serine 390) is a Phosphoserine. Residues 412–432 (FVHSLVTILAVCIYGIAPVGF) form a helical membrane-spanning segment. At 433-655 (SQHETVDSVL…NPEVPDQFYR (223 aa)) the chain is on the lumenal side. An N-linked (GlcNAc...) asparagine glycan is attached at asparagine 583. Residues 656–676 (LWLSLFLHAGILHCLVSICFQ) form a helical membrane-spanning segment. Topologically, residues 677-691 (MTVLRDLEKLAGWHR) are cytoplasmic. Residues 692–712 (IAIIYLLSGVTGNLASAIFLP) form a helical membrane-spanning segment. The Lumenal portion of the chain corresponds to 713 to 714 (YR). A helical transmembrane segment spans residues 715–735 (AEVGPAGSQFGILACLFVELF). Over 736–746 (QSWQILARPWR) the chain is Cytoplasmic. Residues 747 to 767 (AFFKLLAVVLFLFTFGLLPWI) form a helical membrane-spanning segment. Topologically, residues 768 to 772 (DNFAH) are lumenal. The chain crosses the membrane as a helical span at residues 773–793 (ISGFISGLFLSFAFLPYISFG). Residues 794–803 (KFDLYRKRCQ) are Cytoplasmic-facing. Residues 804–824 (IIIFQVVFLGLLAGLVVLFYF) traverse the membrane as a helical segment. The Lumenal portion of the chain corresponds to 825–855 (YPVRCEWCEFLTCIPFTDKFCEKYELDAQLH).

This sequence belongs to the peptidase S54 family. Homodimer, or homooligomer. Interacts with TGFA and HBEGF. Interacts with EGF; may retain EGF in the endoplasmic reticulum and regulates its degradation through the endoplasmic reticulum-associated degradation (ERAD). Interacts (via cytoplasmic N-terminus) with FRMD8/iTAP; this interaction leads to mutual protein stabilization. Interacts with ADAM17/TACE.

It is found in the endoplasmic reticulum membrane. The protein localises to the golgi apparatus membrane. Regulates ADAM17 protease, a sheddase of the epidermal growth factor (EGF) receptor ligands and TNF, thereby plays a role in sleep, cell survival, proliferation, migration and inflammation. Does not exhibit any protease activity on its own. This is Inactive rhomboid protein 1 (RHBDF1) from Papio anubis (Olive baboon).